The following is a 315-amino-acid chain: Acetyl-coenzyme A carboxylase carboxyl transferase subunit alpha (315 aa).

Residues 36 to 289 form the CoA carboxyltransferase C-terminal domain; it reads LSKKRLELME…RKAVAAELKI (254 aa).

It belongs to the AccA family. As to quaternary structure, acetyl-CoA carboxylase is a heterohexamer composed of biotin carboxyl carrier protein (AccB), biotin carboxylase (AccC) and two subunits each of ACCase subunit alpha (AccA) and ACCase subunit beta (AccD).

It is found in the cytoplasm. It carries out the reaction N(6)-carboxybiotinyl-L-lysyl-[protein] + acetyl-CoA = N(6)-biotinyl-L-lysyl-[protein] + malonyl-CoA. It participates in lipid metabolism; malonyl-CoA biosynthesis; malonyl-CoA from acetyl-CoA: step 1/1. Functionally, component of the acetyl coenzyme A carboxylase (ACC) complex. First, biotin carboxylase catalyzes the carboxylation of biotin on its carrier protein (BCCP) and then the CO(2) group is transferred by the carboxyltransferase to acetyl-CoA to form malonyl-CoA. The sequence is that of Acetyl-coenzyme A carboxylase carboxyl transferase subunit alpha from Francisella tularensis subsp. holarctica (strain FTNF002-00 / FTA).